The sequence spans 579 residues: MTDQQSRPASPRRRSTQSIADRLALDALYEIAKTFAAAPDPVAEVPQIFNVLSSFLDLRHGVLALLAEPGEGAGVNPYVIAATAFQRSPEAPAADVLPDAVARIVFRSGVPFVSFDLAAEFGAEAVPKRLRDAGQTLIAVPLRDPERSHFVLGVLAAYRSHDHNRSGFSDADVRVLTMVASLLEQALRFRRRIARDRERALEDTRRMLQTVTEQRGPAAPVSLDGIVGSSPAIAEVVAQIKRVASTRMPVLLRGESGTGKELFARAVHAQSPRAKGPFIRVNCAALSETLLESELFGHEKGAFTGATALKKGRFELADGGTLFLDEIGEISPAFQSKLLRVLQEGEFERVGGAKTIKVDTRIVAATNRDLEDAVARGQFRADLYFRICVVPIVLPPLRNRKSDIKPLAQLFLDRFNKQNATNVKFAADAFDQICRCQFPGNVRELENCVNRAAALSDGAIVLAEELACRQGACLSAELFRLQDGTSPIGGLAVGRVITPTVRVSAPPPEPAPAPEPAPEAPPREEVPLRTKTAQLSREELLRALESAGWVQAKAARLLGMTPRQIAYALQKFEIELRKI.

The region spanning 40–187 is the GAF domain; it reads DPVAEVPQIF…MVASLLEQAL (148 aa). Residues 226–454 enclose the Sigma-54 factor interaction domain; sequence IVGSSPAIAE…LENCVNRAAA (229 aa). ATP is bound by residues 254 to 261 and 317 to 326; these read GESGTGKE and ADGGTLFLDE. The interval 464-536 is inter-domain linker; sequence EELACRQGAC…PLRTKTAQLS (73 aa). A divalent metal cation-binding residues include Cys-468 and Cys-473. The segment at 502-529 is disordered; the sequence is RVSAPPPEPAPAPEPAPEAPPREEVPLR. 7 consecutive repeat copies span residues 505 to 506, 507 to 508, 509 to 510, 511 to 512, 513 to 514, 515 to 516, and 517 to 518. The segment at 505-518 is 7 X 2 AA tandem repeats of X-P; the sequence is APPPEPAPAPEPAP. A compositionally biased stretch (pro residues) spans 505–520; sequence APPPEPAPAPEPAPEA. A C-terminal DNA-binding domain region spans residues 537-579; that stretch reads REELLRALESAGWVQAKAARLLGMTPRQIAYALQKFEIELRKI. Positions 551 to 570 form a DNA-binding region, H-T-H motif; the sequence is QAKAARLLGMTPRQIAYALQ.

Interacts with sigma-54.

Required for activation of most nif operons, which are directly involved in nitrogen fixation. The polypeptide is Nif-specific regulatory protein (nifA1) (Rhodobacter capsulatus (strain ATCC BAA-309 / NBRC 16581 / SB1003)).